A 437-amino-acid chain; its full sequence is Purple acid phosphatase 21 (437 aa).

Positions 1–25 (MKKMKIFGFLISFSLFFLSPFVCQA) are cleaved as a signal peptide. Residue asparagine 30 is glycosylated (N-linked (GlcNAc...) asparagine). The Fe cation site is built by aspartate 152, aspartate 179, and tyrosine 182. Position 179 (aspartate 179) interacts with Zn(2+). Zn(2+) is bound by residues asparagine 212 and histidine 296. Asparagine 212 contacts substrate. Residue histidine 306 is the Proton donor of the active site. Residue histidine 333 coordinates Zn(2+). 333 to 335 (HVH) serves as a coordination point for substrate. Histidine 335 contributes to the Fe cation binding site.

This sequence belongs to the metallophosphoesterase superfamily. Purple acid phosphatase family. Homodimer. The cofactor is Fe cation. Requires Zn(2+) as cofactor. As to expression, expressed flowers and siliques.

The protein localises to the secreted. It carries out the reaction a phosphate monoester + H2O = an alcohol + phosphate. In Arabidopsis thaliana (Mouse-ear cress), this protein is Purple acid phosphatase 21 (PAP21).